We begin with the raw amino-acid sequence, 500 residues long: Inner membrane transporter YjeM (500 aa).

Residues 1–10 lie on the Cytoplasmic side of the membrane; sequence MTHTIKKMSL. The chain crosses the membrane as a helical span at residues 11 to 31; sequence IGLILMIFTSVFGFANSPSAF. At 32–37 the chain is on the periplasmic side; it reads YLMGYS. A helical transmembrane segment spans residues 38–58; sequence AIPWYIFSALLFFIPFALMMA. The Cytoplasmic segment spans residues 59-83; that stretch reads EMGSAYRKEEGGIYSWMNNSVGPRY. Residues 84–104 traverse the membrane as a helical segment; the sequence is AFIGTFMWFSSYVIWMVSTAA. At 105 to 124 the chain is on the periplasmic side; it reads KIWVPFSTFVFGADMTQHWR. Residues 125–145 form a helical membrane-spanning segment; sequence IAGLEPTQVVGLLAVGWMILV. The Cytoplasmic segment spans residues 146–163; it reads TCVAARGINKIARITAVG. Residues 164 to 184 traverse the membrane as a helical segment; it reads GIAVMCLNLVLLLVSVAILLL. At 185 to 209 the chain is on the periplasmic side; the sequence is NGGHFAQEINFTSSPNPGYHSGLAM. The chain crosses the membrane as a helical span at residues 210–230; sequence LSFVVFAIFAYGGIEAVGGLV. At 231 to 243 the chain is on the cytoplasmic side; that stretch reads DKTEKPEKNFAKG. Residues 244-264 form a helical membrane-spanning segment; the sequence is IVFAAIVISIGYSLAIFLWGV. Residues 265–308 lie on the Periplasmic side of the membrane; the sequence is STNWQQILSNSAVNLGNITYILMSSLGTTLGNALNLSPEAAMTV. Residues 309-329 traverse the membrane as a helical segment; it reads GVWFARITGLSMFLAYTGAFF. The Cytoplasmic segment spans residues 330–361; sequence TLSYSPLKAIIQGTPKALWPAPMTTLNANGMP. A helical membrane pass occupies residues 362-382; sequence ATAMWLQCVLVSLFILLVSFG. Residues 383–394 are Periplasmic-facing; that stretch reads GDTASAFYNKLT. The chain crosses the membrane as a helical span at residues 395 to 415; the sequence is LMANVSMTLPYLFLALAFPFF. At 416-433 the chain is on the cytoplasmic side; sequence KARQDLERPFVLFKTKAS. Residues 434-454 form a helical membrane-spanning segment; sequence TLVATGVVVLVVTFANVFTII. At 455–462 the chain is on the periplasmic side; that stretch reads QPVIEAGD. Residues 463-483 traverse the membrane as a helical segment; the sequence is WDSALWMIGGPIFFSLLAMAI. At 484 to 500 the chain is on the cytoplasmic side; sequence YQNYSSRMSADPEWAAE.

This sequence belongs to the amino acid-polyamine-organocation (APC) superfamily.

The protein localises to the cell inner membrane. The chain is Inner membrane transporter YjeM (yjeM) from Salmonella typhi.